Reading from the N-terminus, the 156-residue chain is Small ribosomal subunit protein uS7c (156 aa).

This sequence belongs to the universal ribosomal protein uS7 family. As to quaternary structure, part of the 30S ribosomal subunit.

The protein resides in the plastid. It localises to the chloroplast. Functionally, one of the primary rRNA binding proteins, it binds directly to 16S rRNA where it nucleates assembly of the head domain of the 30S subunit. The polypeptide is Small ribosomal subunit protein uS7c (rps7) (Ostreococcus tauri).